Reading from the N-terminus, the 117-residue chain is Antitoxin RelB3 (117 aa).

In terms of biological role, antitoxin component of a type II toxin-antitoxin (TA) system. Neutralizes the effect of cognate toxin RelE3, but no other RelE or ParE toxin. The polypeptide is Antitoxin RelB3 (relB3) (Caulobacter vibrioides (strain ATCC 19089 / CIP 103742 / CB 15) (Caulobacter crescentus)).